A 270-amino-acid polypeptide reads, in one-letter code: Regulatory protein RecX (270 aa).

Belongs to the RecX family.

The protein resides in the cytoplasm. In terms of biological role, modulates RecA activity. This is Regulatory protein RecX from Bacillus cereus (strain B4264).